The following is a 349-amino-acid chain: UDP-3-O-acylglucosamine N-acyltransferase (349 aa).

The Proton acceptor role is filled by His246.

Belongs to the transferase hexapeptide repeat family. LpxD subfamily. In terms of assembly, homotrimer.

It catalyses the reaction a UDP-3-O-[(3R)-3-hydroxyacyl]-alpha-D-glucosamine + a (3R)-hydroxyacyl-[ACP] = a UDP-2-N,3-O-bis[(3R)-3-hydroxyacyl]-alpha-D-glucosamine + holo-[ACP] + H(+). The protein operates within bacterial outer membrane biogenesis; LPS lipid A biosynthesis. Its function is as follows. Catalyzes the N-acylation of UDP-3-O-acylglucosamine using 3-hydroxyacyl-ACP as the acyl donor. Is involved in the biosynthesis of lipid A, a phosphorylated glycolipid that anchors the lipopolysaccharide to the outer membrane of the cell. The sequence is that of UDP-3-O-acylglucosamine N-acyltransferase from Protochlamydia amoebophila (strain UWE25).